Here is a 467-residue protein sequence, read N- to C-terminus: Argininosuccinate lyase (467 aa).

The protein belongs to the lyase 1 family. Argininosuccinate lyase subfamily.

It localises to the cytoplasm. It carries out the reaction 2-(N(omega)-L-arginino)succinate = fumarate + L-arginine. It participates in amino-acid biosynthesis; L-arginine biosynthesis; L-arginine from L-ornithine and carbamoyl phosphate: step 3/3. In Allorhizobium ampelinum (strain ATCC BAA-846 / DSM 112012 / S4) (Agrobacterium vitis (strain S4)), this protein is Argininosuccinate lyase.